A 475-amino-acid polypeptide reads, in one-letter code: Bifunctional protein HldE (475 aa).

The tract at residues 1–318 (MKITLPEFEK…ANALYTEQET (318 aa)) is ribokinase. 195–198 (NMSE) provides a ligand contact to ATP. Asp264 is a catalytic residue. Positions 344–475 (MTNGCFDILH…DIIKTIRERG (132 aa)) are cytidylyltransferase.

This sequence in the N-terminal section; belongs to the carbohydrate kinase PfkB family. In the C-terminal section; belongs to the cytidylyltransferase family. As to quaternary structure, homodimer.

The catalysed reaction is D-glycero-beta-D-manno-heptose 7-phosphate + ATP = D-glycero-beta-D-manno-heptose 1,7-bisphosphate + ADP + H(+). The enzyme catalyses D-glycero-beta-D-manno-heptose 1-phosphate + ATP + H(+) = ADP-D-glycero-beta-D-manno-heptose + diphosphate. The protein operates within nucleotide-sugar biosynthesis; ADP-L-glycero-beta-D-manno-heptose biosynthesis; ADP-L-glycero-beta-D-manno-heptose from D-glycero-beta-D-manno-heptose 7-phosphate: step 1/4. It functions in the pathway nucleotide-sugar biosynthesis; ADP-L-glycero-beta-D-manno-heptose biosynthesis; ADP-L-glycero-beta-D-manno-heptose from D-glycero-beta-D-manno-heptose 7-phosphate: step 3/4. In terms of biological role, catalyzes the phosphorylation of D-glycero-D-manno-heptose 7-phosphate at the C-1 position to selectively form D-glycero-beta-D-manno-heptose-1,7-bisphosphate. Functionally, catalyzes the ADP transfer from ATP to D-glycero-beta-D-manno-heptose 1-phosphate, yielding ADP-D-glycero-beta-D-manno-heptose. This is Bifunctional protein HldE from Aeromonas hydrophila subsp. hydrophila (strain ATCC 7966 / DSM 30187 / BCRC 13018 / CCUG 14551 / JCM 1027 / KCTC 2358 / NCIMB 9240 / NCTC 8049).